A 199-amino-acid polypeptide reads, in one-letter code: Elongation factor Ts (199 aa).

Positions 82–85 (TDFV) are involved in Mg(2+) ion dislocation from EF-Tu.

Belongs to the EF-Ts family.

It localises to the cytoplasm. In terms of biological role, associates with the EF-Tu.GDP complex and induces the exchange of GDP to GTP. It remains bound to the aminoacyl-tRNA.EF-Tu.GTP complex up to the GTP hydrolysis stage on the ribosome. The polypeptide is Elongation factor Ts (Leptospira interrogans serogroup Icterohaemorrhagiae serovar Lai (strain 56601)).